Consider the following 179-residue polypeptide: Large ribosomal subunit protein uL6 (179 aa).

Belongs to the universal ribosomal protein uL6 family. Part of the 50S ribosomal subunit.

Its function is as follows. This protein binds to the 23S rRNA, and is important in its secondary structure. It is located near the subunit interface in the base of the L7/L12 stalk, and near the tRNA binding site of the peptidyltransferase center. The sequence is that of Large ribosomal subunit protein uL6 from Chlorobium chlorochromatii (strain CaD3).